We begin with the raw amino-acid sequence, 224 residues long: Large ribosomal subunit protein bL25 (224 aa).

Belongs to the bacterial ribosomal protein bL25 family. CTC subfamily. As to quaternary structure, part of the 50S ribosomal subunit; part of the 5S rRNA/L5/L18/L25 subcomplex. Contacts the 5S rRNA. Binds to the 5S rRNA independently of L5 and L18.

In terms of biological role, this is one of the proteins that binds to the 5S RNA in the ribosome where it forms part of the central protuberance. The polypeptide is Large ribosomal subunit protein bL25 (Psychrobacter arcticus (strain DSM 17307 / VKM B-2377 / 273-4)).